The chain runs to 451 residues: Chromosomal replication initiator protein DnaA (451 aa).

The domain I, interacts with DnaA modulators stretch occupies residues 1-77; the sequence is MTENEQIFWN…EVYNAQISVD (77 aa). A domain II region spans residues 77–110; sequence DYVFEEDLMIEQNQTKINQKPKQQALNSLPTVTS. The segment at 111–329 is domain III, AAA+ region; sequence DLNSKYSFEN…GALKDISLGA (219 aa). ATP is bound by residues G155, G157, K158, and T159. The domain IV, binds dsDNA stretch occupies residues 330–451; that stretch reads NFKQIDTITV…EIETIKNKIK (122 aa).

The protein belongs to the DnaA family. Oligomerizes as a right-handed, spiral filament on DNA at oriC.

The protein localises to the cytoplasm. In terms of biological role, plays an essential role in the initiation and regulation of chromosomal replication. ATP-DnaA binds to the origin of replication (oriC) to initiate formation of the DNA replication initiation complex once per cell cycle. Binds the DnaA box (a 9 base pair repeat at the origin) and separates the double-stranded (ds)DNA. Forms a right-handed helical filament on oriC DNA; dsDNA binds to the exterior of the filament while single-stranded (ss)DNA is stabiized in the filament's interior. The ATP-DnaA-oriC complex binds and stabilizes one strand of the AT-rich DNA unwinding element (DUE), permitting loading of DNA polymerase. After initiation quickly degrades to an ADP-DnaA complex that is not apt for DNA replication. Binds acidic phospholipids. This chain is Chromosomal replication initiator protein DnaA, found in Streptococcus pyogenes serotype M49 (strain NZ131).